Reading from the N-terminus, the 595-residue chain is L-allo-isoleucine:holo-[CmaA peptidyl-carrier protein] ligase (595 aa).

Residues 507–582 form the Carrier domain; it reads VVSPQAGSAV…EWVQYYATHA (76 aa). O-(pantetheine 4'-phosphoryl)serine is present on Ser-542.

The protein belongs to the ATP-dependent AMP-binding enzyme family. Homodimer. Requires pantetheine 4'-phosphate as cofactor.

It carries out the reaction L-alloisoleucine + holo-[CmaA peptidyl-carrier protein] + ATP = L-alloisoleucyl-[CmaA peptidyl-carrier protein] + AMP + diphosphate. Its function is as follows. Involved in the biosynthesis of the phytotoxin coronatine (COR) which mimics the plant hormone jasmonic acid isoleucine and promotes opening of stomata for bacterial entry, bacterial growth in the apoplast, systemic susceptibility, and disease symptoms. CmaA catalyzes the adenylation of L-allo-isoleucine (via the A domain) and the attachment of L-allo-isoleucine to the 4'-phosphopantetheine arm located within the T domain of CmaA. It can also use L-isoleucine, L-leucine and L-valine as substrates. This is L-allo-isoleucine:holo-[CmaA peptidyl-carrier protein] ligase from Pseudomonas savastanoi pv. glycinea (Pseudomonas syringae pv. glycinea).